The following is a 222-amino-acid chain: Octanoyltransferase (222 aa).

The BPL/LPL catalytic domain maps to 35–210 (ETTPDELWLV…EFVHLLGYPK (176 aa)). Residues 74–81 (RGGQVTYH), 141–143 (SLG), and 154–156 (GLA) contribute to the substrate site. The active-site Acyl-thioester intermediate is Cys-172.

It belongs to the LipB family.

Its subcellular location is the cytoplasm. The catalysed reaction is octanoyl-[ACP] + L-lysyl-[protein] = N(6)-octanoyl-L-lysyl-[protein] + holo-[ACP] + H(+). Its pathway is protein modification; protein lipoylation via endogenous pathway; protein N(6)-(lipoyl)lysine from octanoyl-[acyl-carrier-protein]: step 1/2. Its function is as follows. Catalyzes the transfer of endogenously produced octanoic acid from octanoyl-acyl-carrier-protein onto the lipoyl domains of lipoate-dependent enzymes. Lipoyl-ACP can also act as a substrate although octanoyl-ACP is likely to be the physiological substrate. In Serratia proteamaculans (strain 568), this protein is Octanoyltransferase.